We begin with the raw amino-acid sequence, 60 residues long: Large ribosomal subunit protein bL32 (60 aa).

Residues 1-23 (MAKHPVPKKKTSKARRDARRSHH) show a composition bias toward basic residues. The disordered stretch occupies residues 1 to 28 (MAKHPVPKKKTSKARRDARRSHHALTPP).

Belongs to the bacterial ribosomal protein bL32 family. In terms of assembly, part of the 50S ribosomal subunit.

Its function is as follows. Found on the solvent side of the large subunit. The protein is Large ribosomal subunit protein bL32 (rpmF) of Thermus thermophilus (strain ATCC BAA-163 / DSM 7039 / HB27).